Reading from the N-terminus, the 122-residue chain is Large ribosomal subunit protein uL18 (122 aa).

Belongs to the universal ribosomal protein uL18 family. As to quaternary structure, part of the 50S ribosomal subunit; part of the 5S rRNA/L5/L18/L25 subcomplex. Contacts the 5S and 23S rRNAs.

Its function is as follows. This is one of the proteins that bind and probably mediate the attachment of the 5S RNA into the large ribosomal subunit, where it forms part of the central protuberance. The sequence is that of Large ribosomal subunit protein uL18 from Acetivibrio thermocellus (strain ATCC 27405 / DSM 1237 / JCM 9322 / NBRC 103400 / NCIMB 10682 / NRRL B-4536 / VPI 7372) (Clostridium thermocellum).